The chain runs to 377 residues: Lipoyl synthase, mitochondrial (377 aa).

The [4Fe-4S] cluster site is built by Cys-103, Cys-108, Cys-114, Cys-134, Cys-138, Cys-141, and Ser-349. Residues 119–338 (EHGTQTATIM…EERGNELGFL (220 aa)) form the Radical SAM core domain.

Belongs to the radical SAM superfamily. Lipoyl synthase family. Requires [4Fe-4S] cluster as cofactor.

Its subcellular location is the mitochondrion. It catalyses the reaction [[Fe-S] cluster scaffold protein carrying a second [4Fe-4S](2+) cluster] + N(6)-octanoyl-L-lysyl-[protein] + 2 oxidized [2Fe-2S]-[ferredoxin] + 2 S-adenosyl-L-methionine + 4 H(+) = [[Fe-S] cluster scaffold protein] + N(6)-[(R)-dihydrolipoyl]-L-lysyl-[protein] + 4 Fe(3+) + 2 hydrogen sulfide + 2 5'-deoxyadenosine + 2 L-methionine + 2 reduced [2Fe-2S]-[ferredoxin]. It participates in protein modification; protein lipoylation via endogenous pathway; protein N(6)-(lipoyl)lysine from octanoyl-[acyl-carrier-protein]: step 2/2. Its function is as follows. Catalyzes the radical-mediated insertion of two sulfur atoms into the C-6 and C-8 positions of the octanoyl moiety bound to the lipoyl domains of lipoate-dependent enzymes, thereby converting the octanoylated domains into lipoylated derivatives. In Drosophila melanogaster (Fruit fly), this protein is Lipoyl synthase, mitochondrial.